A 307-amino-acid chain; its full sequence is Acyl transferase (307 aa).

Catalysis depends on charge relay system residues Ser116, Asp213, and His243.

The protein belongs to the LuxD family.

The protein operates within lipid metabolism; fatty acid reduction for biolumincescence. Its function is as follows. Acyl transferase is part of the fatty acid reductase system required for aldehyde biosynthesis; it produces fatty acids for the luminescent reaction. The protein is Acyl transferase of Aliivibrio fischeri (Vibrio fischeri).